Reading from the N-terminus, the 135-residue chain is Biglycan (135 aa).

LRR repeat units follow at residues K4 to E24, T25 to R46, K49 to P72, T73 to K95, and L96 to P117. N-linked (GlcNAc...) asparagine glycosylation occurs at N65. Residue N106 is glycosylated (N-linked (GlcNAc...) asparagine).

The protein belongs to the small leucine-rich proteoglycan (SLRP) family. SLRP class I subfamily. In terms of assembly, homodimer. Forms a ternary complex with MFAP2 and ELN. Post-translationally, the two attached glycosaminoglycan chains can be either chondroitin sulfate or dermatan sulfate. Found in several connective tissues, especially in articular cartilages.

It localises to the secreted. The protein localises to the extracellular space. The protein resides in the extracellular matrix. In terms of biological role, may be involved in collagen fiber assembly. The chain is Biglycan (BGN) from Oryctolagus cuniculus (Rabbit).